We begin with the raw amino-acid sequence, 191 residues long: Cytochrome c oxidase assembly protein CtaG (191 aa).

At 1–9 (MALNGPQKT) the chain is on the cytoplasmic side. A helical; Signal-anchor for type II membrane protein transmembrane segment spans residues 10–30 (VVQLVSVVVVMGGLAWASVPF). Residues 31 to 191 (YDWFCRVTGF…LDAGEKTNTN (161 aa)) are Periplasmic-facing.

This sequence belongs to the COX11/CtaG family.

The protein localises to the cell inner membrane. Its function is as follows. Exerts its effect at some terminal stage of cytochrome c oxidase synthesis, probably by being involved in the insertion of the copper B into subunit I. In Ruegeria pomeroyi (strain ATCC 700808 / DSM 15171 / DSS-3) (Silicibacter pomeroyi), this protein is Cytochrome c oxidase assembly protein CtaG.